The primary structure comprises 356 residues: CMP-sialic acid transporter 2 (356 aa).

Residues 1–24 (MEYRRVKDQESYDVVSQKDIESPG) show a composition bias toward basic and acidic residues. Residues 1–43 (MEYRRVKDQESYDVVSQKDIESPGERSLSSTSATSSLSTAGAS) form a disordered region. The Cytoplasmic portion of the chain corresponds to 1 to 52 (MEYRRVKDQESYDVVSQKDIESPGERSLSSTSATSSLSTAGASKGNNSWKLK). Positions 27 to 43 (SLSSTSATSSLSTAGAS) are enriched in low complexity. The helical transmembrane segment at 53-73 (SIVTLALTLLTSSQAILIVWS) threads the bilayer. Topologically, residues 74–82 (KRAGKYEYS) are lumenal. A helical membrane pass occupies residues 83-103 (VTTANFSVEALKCLLSLIALY). At 104-125 (RTWNSQGVTEDNRLSTSFDEVS) the chain is on the cytoplasmic side. Residues 126-146 (VYPIPAILYMVKNLLQYYIFA) form a helical membrane-spanning segment. Residues 147–149 (YVD) are Lumenal-facing. A helical membrane pass occupies residues 150–172 (APAYQILKNLNIISTGVLYRIIL). Over 173 to 175 (KKK) the chain is Cytoplasmic. The chain crosses the membrane as a helical span at residues 176 to 196 (LSEIQWAAFILLCAGCTTAQL). The Lumenal segment spans residues 197–211 (NPSSDHVLQTPIQGW). Residues 212–232 (VMAIVMALLSGFAGVYTEAII) traverse the membrane as a helical segment. The Cytoplasmic segment spans residues 233 to 239 (KKRPSRN). Residues 240–260 (INVQNFWLYIFGMLFNLVAIC) traverse the membrane as a helical segment. The Lumenal portion of the chain corresponds to 261–277 (VQDFDAVMNKGFFHGYS). The chain crosses the membrane as a helical span at residues 278-298 (FITVLMILNHALSGIAVSMVM). Over 299–314 (KYADNIVKVYSTSVAM) the chain is Cytoplasmic. A helical transmembrane segment spans residues 315–335 (LLTAVVSVFLFGFHLSLAFFL). Over 336–356 (GSTVVSVSVYLHSVGKPQPQK) the chain is Lumenal.

The protein belongs to the nucleotide-sugar transporter family. CMP-Sialate:CMP antiporter (TC 2.A.7.12) subfamily.

The protein resides in the golgi apparatus membrane. Its function is as follows. Sugar transporter involved in the transport of CMP-sialic acid from the cytoplasm into the Golgi. May transport important nucleotide sugars such as CMP-Kdo (2-keto-3-deoxy-D-manno-octulosonic acid) in physiological conditions. This chain is CMP-sialic acid transporter 2, found in Oryza sativa subsp. indica (Rice).